Consider the following 329-residue polypeptide: Putative L-ascorbate peroxidase 6 (329 aa).

His123 (proton acceptor) is an active-site residue. His244 is a heme b binding site.

It belongs to the peroxidase family. Ascorbate peroxidase subfamily. It depends on heme b as a cofactor.

It catalyses the reaction L-ascorbate + H2O2 = L-dehydroascorbate + 2 H2O. Functionally, plays a key role in hydrogen peroxide removal. In Arabidopsis thaliana (Mouse-ear cress), this protein is Putative L-ascorbate peroxidase 6 (APX6).